Consider the following 47-residue polypeptide: Large ribosomal subunit protein bL33C (47 aa).

It belongs to the bacterial ribosomal protein bL33 family.

This is Large ribosomal subunit protein bL33C from Staphylococcus aureus (strain MRSA252).